The primary structure comprises 413 residues: NAD(P)H oxidoreductase RTN4IP1, mitochondrial (413 aa).

The transit peptide at 1–23 (MTAAGFNSILCLRQLVRLNRRQY) directs the protein to the mitochondrion. The tract at residues 27–52 (AKSVLSGSQTNDQATPPPTSKSADKM) is disordered. Positions 31–40 (LSGSQTNDQA) are enriched in polar residues. Residues 61-405 (GDIDELQLSE…SGHLRGKIVV (345 aa)) enclose the Enoyl reductase (ER) domain. Residues S228, G230, V231, S251, Y269, G353, F355, H398, and R400 each coordinate NADPH.

It belongs to the zinc-containing alcohol dehydrogenase family. Quinone oxidoreductase subfamily.

It localises to the mitochondrion matrix. The enzyme catalyses a quinone + NADH + H(+) = a quinol + NAD(+). It catalyses the reaction a quinone + NADPH + H(+) = a quinol + NADP(+). It functions in the pathway cofactor biosynthesis; ubiquinone biosynthesis. Functionally, NAD(P)H oxidoreductase. Involved in the ubiquinone biosynthetic pathway. The sequence is that of NAD(P)H oxidoreductase RTN4IP1, mitochondrial from Drosophila melanogaster (Fruit fly).